The primary structure comprises 487 residues: MTTHYIAGNWQAGQGETLQSLNPVTQAVIWQGQGADASQVDAAVQAARQAFPAWAQLSLEARIDVLEKFAAQLKVHAEAMAQCIGEETGKPLWESATEVTSMINKVAISVQSYRERTGEKSGPLADATAVLRHKPHGVVAVFGPYNFPGHLPNGHIVPALLAGNCVVFKPSELTPKVAELTVNCWIAAGLPAGVLNLVQGARETGVALAANPGIDGLFFTGSSRTGNLLHQQFAGRPDKILALEMGGNNPLVVDEVKDLDAAVYTIIQSAFISAGQRCTCARRLLVPQGAWGDALIARLVEVCKTITVGAFDEQPAPFMGSVISLQAARALLAAQVELAAKGGVKLLEMTQPQADAALLTPGIVDVTAVADRPDEEFFGPLLQVIRYADFDAAIDEANNTQYGLAAGLLSDSRARYQYFWLRSRAGIVNWNKQLTGAASSAPFGGVGASGNHRASAYYAADYCAYPVASLETASLALPATLTPGVTL.

221 to 226 (GSSRTG) contacts NAD(+). Active-site residues include E244 and C278.

This sequence belongs to the aldehyde dehydrogenase family. AstD subfamily.

The catalysed reaction is N-succinyl-L-glutamate 5-semialdehyde + NAD(+) + H2O = N-succinyl-L-glutamate + NADH + 2 H(+). It participates in amino-acid degradation; L-arginine degradation via AST pathway; L-glutamate and succinate from L-arginine: step 4/5. Catalyzes the NAD-dependent reduction of succinylglutamate semialdehyde into succinylglutamate. The chain is N-succinylglutamate 5-semialdehyde dehydrogenase from Pseudomonas putida (strain ATCC 47054 / DSM 6125 / CFBP 8728 / NCIMB 11950 / KT2440).